Here is a 315-residue protein sequence, read N- to C-terminus: Ribosomal RNA small subunit methyltransferase H (315 aa).

S-adenosyl-L-methionine contacts are provided by residues 33-35 (GGH), aspartate 52, phenylalanine 84, aspartate 106, and glutamine 113. Residues 294-315 (SSDELEENNRSHSAKLRVAEKL) form a disordered region.

It belongs to the methyltransferase superfamily. RsmH family.

The protein resides in the cytoplasm. The catalysed reaction is cytidine(1402) in 16S rRNA + S-adenosyl-L-methionine = N(4)-methylcytidine(1402) in 16S rRNA + S-adenosyl-L-homocysteine + H(+). Functionally, specifically methylates the N4 position of cytidine in position 1402 (C1402) of 16S rRNA. This is Ribosomal RNA small subunit methyltransferase H from Lactobacillus johnsonii (strain CNCM I-12250 / La1 / NCC 533).